The primary structure comprises 170 residues: Thialysine N-epsilon-acetyltransferase (170 aa).

The 163-residue stretch at 4-166 folds into the N-acetyltransferase domain; that stretch reads TRIREARESD…FRFEGEAMRE (163 aa). 27–28 is a binding site for substrate; the sequence is FE. Lys29 is modified (N6-acetyllysine). Residue Glu92 participates in substrate binding. Acetyl-CoA is bound by residues 94–96, 102–107, 133–135, and Tyr140; these read IYV, GQGIGT, and NKK. Tyr140 acts as the Proton donor in catalysis. Glu152 contacts substrate.

This sequence belongs to the acetyltransferase family. Homodimer.

Its subcellular location is the cytoplasm. It catalyses the reaction S-(2-aminoethyl)-L-cysteine + acetyl-CoA = S-(2-acetamidoethyl)-L-cysteine + CoA + H(+). The catalysed reaction is an alkane-alpha,omega-diamine + acetyl-CoA = an N-acetylalkane-alpha,omega-diamine + CoA + H(+). Catalyzes the N-acetylation of the amino acid thialysine (S-(2-aminoethyl)-L-cysteine), a L-lysine analog with the 4-methylene group substituted with a sulfur. May also catalyze acetylation of polyamines, such as norspermidine, spermidine or spermine. However, ability to acetylate polyamines is weak, suggesting that it does not act as a diamine acetyltransferase in vivo. This is Thialysine N-epsilon-acetyltransferase from Mus musculus (Mouse).